We begin with the raw amino-acid sequence, 179 residues long: X-linked lymphocyte-regulated protein 5C (179 aa).

Over residues 1–11 the composition is skewed to basic and acidic residues; that stretch reads MSNKEQKDMKK. The interval 1-75 is disordered; that stretch reads MSNKEQKDMK…MQDFKGDDGT (75 aa). The span at 42-53 shows a compositional bias: low complexity; sequence GTSGMGSHSSGS. A compositionally biased stretch (basic and acidic residues) spans 56–75; it reads QEAREPVQKKMQDFKGDDGT. Residues 146–175 adopt a coiled-coil conformation; that stretch reads ITQQQMKILQTAIEDHETKLKNAKDMCDTF.

The protein belongs to the XLR/SYCP3 family. In terms of tissue distribution, expressed in testis (at protein level). Also expressed in ovary. Not detected in other tissues tested.

Its subcellular location is the nucleus. It localises to the chromosome. The chain is X-linked lymphocyte-regulated protein 5C from Mus musculus (Mouse).